We begin with the raw amino-acid sequence, 200 residues long: Holliday junction branch migration complex subunit RuvA (200 aa).

The tract at residues methionine 1–isoleucine 64 is domain I. Residues glutamate 65–threonine 143 form a domain II region. Residues alanine 144–glutamate 154 form a flexible linker region. Positions glutamate 154 to histidine 200 are domain III.

It belongs to the RuvA family. As to quaternary structure, homotetramer. Forms an RuvA(8)-RuvB(12)-Holliday junction (HJ) complex. HJ DNA is sandwiched between 2 RuvA tetramers; dsDNA enters through RuvA and exits via RuvB. An RuvB hexamer assembles on each DNA strand where it exits the tetramer. Each RuvB hexamer is contacted by two RuvA subunits (via domain III) on 2 adjacent RuvB subunits; this complex drives branch migration. In the full resolvosome a probable DNA-RuvA(4)-RuvB(12)-RuvC(2) complex forms which resolves the HJ.

It is found in the cytoplasm. The RuvA-RuvB-RuvC complex processes Holliday junction (HJ) DNA during genetic recombination and DNA repair, while the RuvA-RuvB complex plays an important role in the rescue of blocked DNA replication forks via replication fork reversal (RFR). RuvA specifically binds to HJ cruciform DNA, conferring on it an open structure. The RuvB hexamer acts as an ATP-dependent pump, pulling dsDNA into and through the RuvAB complex. HJ branch migration allows RuvC to scan DNA until it finds its consensus sequence, where it cleaves and resolves the cruciform DNA. The chain is Holliday junction branch migration complex subunit RuvA from Prosthecochloris aestuarii (strain DSM 271 / SK 413).